Here is a 314-residue protein sequence, read N- to C-terminus: Olfactory receptor 5P66 (314 aa).

Residues 1-28 (MAFLENGNHTAVSEFILLGLTDDPVLRI) lie on the Extracellular side of the membrane. Residue Asn8 is glycosylated (N-linked (GlcNAc...) asparagine). The chain crosses the membrane as a helical span at residues 29 to 49 (VLFTIILCIYLVTVSGNLSTI). The Cytoplasmic segment spans residues 50 to 57 (LLIRVSSQ). Residues 58–78 (LHHPMYFFLSHLASADIGLSS) traverse the membrane as a helical segment. Residues 79 to 102 (SVTPNMLVNFLVERSTISYLGCGI) lie on the Extracellular side of the membrane. Cys100 and Cys192 are oxidised to a cystine. Residues 103–123 (QLSSAALFGATECFLLAAMAY) traverse the membrane as a helical segment. Residues 124 to 136 (DRFMAICNPLLYS) lie on the Cytoplasmic side of the membrane. The chain crosses the membrane as a helical span at residues 137–157 (TKMSTKVCVQLIVGSYIAGFL). Over 158-199 (NASSFLLSFFSLLFCGQNIINDFFCDFAPLAELSCSDVSVFV) the chain is Extracellular. A helical transmembrane segment spans residues 200 to 220 (VVISFSAGTVTMLTVFVIAIS). At 221–240 (YSYILITILKMRSTEGRQKA) the chain is on the cytoplasmic side. Residues 241–261 (FSTCTSHLTAVTLFYGTVTFI) form a helical membrane-spanning segment. The Extracellular portion of the chain corresponds to 262-274 (YVMPKSSYSMDQN). The chain crosses the membrane as a helical span at residues 275–295 (KIISVFYMVVVPMLNPLIYSL). The Cytoplasmic segment spans residues 296 to 314 (RNNEIKGALKRHFDRKTFS).

This sequence belongs to the G-protein coupled receptor 1 family.

It is found in the cell membrane. Its function is as follows. Potential odorant receptor. This chain is Olfactory receptor 5P66, found in Mus musculus (Mouse).